The sequence spans 118 residues: Small ribosomal subunit protein eS10 (118 aa).

The tract at residues 91 to 118 (RLKNAPAERPRPSRGGPRRGGYRGRARD) is disordered. A compositionally biased stretch (basic residues) spans 106–118 (GPRRGGYRGRARD).

This sequence belongs to the eukaryotic ribosomal protein eS10 family. As to quaternary structure, component of the small ribosomal subunit. Mature ribosomes consist of a small (40S) and a large (60S) subunit. The 40S subunit contains about 32 different proteins and 1 molecule of RNA (18S). The 60S subunit contains 45 different proteins and 3 molecules of RNA (25S, 5.8S and 5S).

The protein resides in the cytoplasm. In terms of biological role, component of the ribosome, a large ribonucleoprotein complex responsible for the synthesis of proteins in the cell. The small ribosomal subunit (SSU) binds messenger RNAs (mRNAs) and translates the encoded message by selecting cognate aminoacyl-transfer RNA (tRNA) molecules. The large subunit (LSU) contains the ribosomal catalytic site termed the peptidyl transferase center (PTC), which catalyzes the formation of peptide bonds, thereby polymerizing the amino acids delivered by tRNAs into a polypeptide chain. The nascent polypeptides leave the ribosome through a tunnel in the LSU and interact with protein factors that function in enzymatic processing, targeting, and the membrane insertion of nascent chains at the exit of the ribosomal tunnel. The protein is Small ribosomal subunit protein eS10 (RPS10) of Candida albicans (strain SC5314 / ATCC MYA-2876) (Yeast).